We begin with the raw amino-acid sequence, 605 residues long: Tegument protein UL47 homolog (605 aa).

The interval 1–75 (MATDNARPRS…DPWKLEPAND (75 aa)) is disordered. Basic residues predominate over residues 8-17 (PRSRSLRRKS). Basic and acidic residues predominate over residues 54–69 (GADRDPGTRRGIDPWK).

This sequence belongs to the alphaherpesvirinae HHV-1 UL47 family. In terms of assembly, interacts with US3 kinase. Interacts with UL31 and UL34; these interactions seem important for efficient virion nuclear egress. Interacts with UL41/VHS. Post-translationally, phosphorylated by US3. This phosphorylation is required for proper nuclear localization.

The protein localises to the virion tegument. The protein resides in the host nucleus. It is found in the host cytoplasm. Tegument protein that can bind to various RNA transcripts. Plays a role in the attenuation of selective viral and cellular mRNA degradation by modulating the activity of host shutoff RNase UL41/VHS. Also plays a role in the primary envelopment of virions in the perinuclear space, probably by interacting with two nuclear egress proteins UL31 and UL34. The sequence is that of Tegument protein UL47 homolog (sORF1) from Amazona oratrix (yellow-headed parrot).